A 351-amino-acid chain; its full sequence is Phosphoribosylformylglycinamidine cyclo-ligase (351 aa).

This sequence belongs to the AIR synthase family.

It localises to the cytoplasm. The enzyme catalyses 2-formamido-N(1)-(5-O-phospho-beta-D-ribosyl)acetamidine + ATP = 5-amino-1-(5-phospho-beta-D-ribosyl)imidazole + ADP + phosphate + H(+). Its pathway is purine metabolism; IMP biosynthesis via de novo pathway; 5-amino-1-(5-phospho-D-ribosyl)imidazole from N(2)-formyl-N(1)-(5-phospho-D-ribosyl)glycinamide: step 2/2. This Burkholderia ambifaria (strain MC40-6) protein is Phosphoribosylformylglycinamidine cyclo-ligase.